Here is a 160-residue protein sequence, read N- to C-terminus: Peripheral myelin protein 22 (160 aa).

Methionine 1 is a topological domain (cytoplasmic). A helical transmembrane segment spans residues 2-31 (LLLLLSIIVLHVAVLVLLFVSTIVSQWIVG). At 32–64 (NGHATDLWQNCSTSSSGNVHHCFSSSPNEWLQS) the chain is on the extracellular side. Asparagine 41 carries an N-linked (GlcNAc...) asparagine glycan. Residues 65–91 (VQATMILSIIFSILSLFLFFCQLFTLT) form a helical membrane-spanning segment. Topologically, residues 92–95 (KGGR) are cytoplasmic. A helical transmembrane segment spans residues 96 to 119 (FYITGIFQILAGLCVMSAAAIYTV). Over 120–133 (RHPEWHLNSDYSYG) the chain is Extracellular. The chain crosses the membrane as a helical span at residues 134 to 156 (FAYILAWVAFPLALLSGVIYVIL). Topologically, residues 157 to 160 (RKRE) are cytoplasmic.

The protein belongs to the PMP-22/EMP/MP20 family. Post-translationally, ubiquitinated by the DCX(DCAF13) E3 ubiquitin ligase complex, leading to its degradation.

The protein resides in the cell membrane. Functionally, might be involved in growth regulation, and in myelinization in the peripheral nervous system. This Homo sapiens (Human) protein is Peripheral myelin protein 22 (PMP22).